A 129-amino-acid polypeptide reads, in one-letter code: Phosphoribosyl-AMP cyclohydrolase (129 aa).

Asp-78 provides a ligand contact to Mg(2+). Residue Cys-79 participates in Zn(2+) binding. 2 residues coordinate Mg(2+): Asp-80 and Asp-82. Residues Cys-96 and Cys-103 each coordinate Zn(2+).

Belongs to the PRA-CH family. As to quaternary structure, homodimer. It depends on Mg(2+) as a cofactor. Zn(2+) serves as cofactor.

The protein localises to the cytoplasm. It carries out the reaction 1-(5-phospho-beta-D-ribosyl)-5'-AMP + H2O = 1-(5-phospho-beta-D-ribosyl)-5-[(5-phospho-beta-D-ribosylamino)methylideneamino]imidazole-4-carboxamide. It participates in amino-acid biosynthesis; L-histidine biosynthesis; L-histidine from 5-phospho-alpha-D-ribose 1-diphosphate: step 3/9. Catalyzes the hydrolysis of the adenine ring of phosphoribosyl-AMP. The protein is Phosphoribosyl-AMP cyclohydrolase of Nitrosomonas eutropha (strain DSM 101675 / C91 / Nm57).